Here is a 125-residue protein sequence, read N- to C-terminus: Fluoride-specific ion channel FluC (125 aa).

Transmembrane regions (helical) follow at residues 4-24, 35-55, 68-88, and 100-120; these read IALV…VGVW, WGTL…VELV, FLVT…LDAV, and AFYI…GLAL. Na(+) contacts are provided by Gly-75 and Thr-78.

This sequence belongs to the fluoride channel Fluc/FEX (TC 1.A.43) family.

It is found in the cell inner membrane. The catalysed reaction is fluoride(in) = fluoride(out). Its activity is regulated as follows. Na(+) is not transported, but it plays an essential structural role and its presence is essential for fluoride channel function. Fluoride-specific ion channel. Important for reducing fluoride concentration in the cell, thus reducing its toxicity. In Agrobacterium fabrum (strain C58 / ATCC 33970) (Agrobacterium tumefaciens (strain C58)), this protein is Fluoride-specific ion channel FluC.